We begin with the raw amino-acid sequence, 220 residues long: MESVLNFLTNINVIFTLLGYLIGGIPFGYALMKIFYGMDITKIGSGGIGATNVLRALQSKGVSNAKQMALLVLILDLFKGMFAVFLSKLFGLDYSLQWMVAIASILGHCYSPFLNFNGGKGVSTIMGSVVLLIPIESLIGLTVWFFVGKVLKISSLASILGVGTATVLIFFVPYMHIPDSVNILKEVGTQTPMVLIFIFTLIKHAGNIFNLLAGKEKKVL.

Helical transmembrane passes span 11 to 31 (INVIFTLLGYLIGGIPFGYAL), 70 to 90 (LLVLILDLFKGMFAVFLSKLF), 96 to 116 (LQWMVAIASILGHCYSPFLNF), 127 to 147 (GSVVLLIPIESLIGLTVWFFV), 153 to 173 (ISSLASILGVGTATVLIFFVP), and 193 to 213 (MVLIFIFTLIKHAGNIFNLLA).

Belongs to the PlsY family. As to quaternary structure, probably interacts with PlsX.

Its subcellular location is the cell inner membrane. It catalyses the reaction an acyl phosphate + sn-glycerol 3-phosphate = a 1-acyl-sn-glycero-3-phosphate + phosphate. The protein operates within lipid metabolism; phospholipid metabolism. Functionally, catalyzes the transfer of an acyl group from acyl-phosphate (acyl-PO(4)) to glycerol-3-phosphate (G3P) to form lysophosphatidic acid (LPA). This enzyme utilizes acyl-phosphate as fatty acyl donor, but not acyl-CoA or acyl-ACP. This Helicobacter pylori (strain ATCC 700392 / 26695) (Campylobacter pylori) protein is Glycerol-3-phosphate acyltransferase.